A 526-amino-acid chain; its full sequence is MSYPQEVNKRRTFAIISHPDAGKTTITEKVLLYGNAIQTAGSVKGKGSSAHAKSDWMEMEKQRGISITTSVMQFPYNNCLVNLLDTPGHEDFSEDTYRTLTAVDSCLMVIDSAKGVEERTIKLMEVTRLRDTPILTFMNKLDRDIRDPMELLDEVESVLKIRCAPITWPIGCGKLFKGVYHIAKDETYLYQSGQGSTIQEVRIVKGLSSPELDAAVGDDLANQLREELELVQGASNEFDHEAFINGELTPVFFGTALGNFGVDHFLDGLTEWAPKPQARQTDVRTVESSEEKFSGFVFKIQANMDPKHRDRVAFMRVVSGKYEKGMKLKHVRIGKDVVISDALTFMAGDRAHAEEAYAGDIIGLHNHGTIQIGDTFTQGEVMKFTGIPNFAPELFRRIRLKDPLKQKQLLKGLVQLSEEGAVQVFRPLMNNDLIVGAVGVLQFDVVVSRLKTEYNVEAIYEAVNVATARWVECGDAKKFEEFKRKNEQNLALDGGDNLTYIAPTMVNLNLAQERYPDINFFKTREH.

Residues 8 to 277 (NKRRTFAIIS…GLTEWAPKPQ (270 aa)) enclose the tr-type G domain. GTP contacts are provided by residues 17–24 (SHPDAGKT), 85–89 (DTPGH), and 139–142 (NKLD).

This sequence belongs to the TRAFAC class translation factor GTPase superfamily. Classic translation factor GTPase family. PrfC subfamily.

The protein resides in the cytoplasm. In terms of biological role, increases the formation of ribosomal termination complexes and stimulates activities of RF-1 and RF-2. It binds guanine nucleotides and has strong preference for UGA stop codons. It may interact directly with the ribosome. The stimulation of RF-1 and RF-2 is significantly reduced by GTP and GDP, but not by GMP. This is Peptide chain release factor 3 from Actinobacillus pleuropneumoniae serotype 3 (strain JL03).